We begin with the raw amino-acid sequence, 119 residues long: Large ribosomal subunit protein bL17 (119 aa).

Belongs to the bacterial ribosomal protein bL17 family. In terms of assembly, part of the 50S ribosomal subunit. Contacts protein L32.

This Mesoplasma florum (strain ATCC 33453 / NBRC 100688 / NCTC 11704 / L1) (Acholeplasma florum) protein is Large ribosomal subunit protein bL17.